Consider the following 345-residue polypeptide: Fructose-1,6-bisphosphatase class 1 1 (345 aa).

Residues glutamate 90, aspartate 109, leucine 111, and aspartate 112 each contribute to the Mg(2+) site. Residues 112–115 (DGSS) and asparagine 200 contribute to the substrate site. Glutamate 272 provides a ligand contact to Mg(2+).

The protein belongs to the FBPase class 1 family. In terms of assembly, homotetramer. Mg(2+) serves as cofactor.

It localises to the cytoplasm. The enzyme catalyses beta-D-fructose 1,6-bisphosphate + H2O = beta-D-fructose 6-phosphate + phosphate. The protein operates within carbohydrate biosynthesis; gluconeogenesis. This chain is Fructose-1,6-bisphosphatase class 1 1, found in Nitrobacter hamburgensis (strain DSM 10229 / NCIMB 13809 / X14).